Here is a 488-residue protein sequence, read N- to C-terminus: Katanin p60 ATPase-containing subunit A-like 1 (488 aa).

An N-acetylmethionine modification is found at Met-1. The tract at residues 95-179 is disordered; it reads DPAVWPPPVP…GASDSEIPKF (85 aa). Basic and acidic residues predominate over residues 116–127; it reads PNREVRPLRKDV. A compositionally biased stretch (low complexity) spans 128 to 138; the sequence is GAGARGLVGRA. Basic and acidic residues predominate over residues 142–167; it reads SKSDKPASRDKDYRARGRDDKARKNV. A Phosphoserine modification is found at Ser-172. 246 to 253 contributes to the ATP binding site; the sequence is GPPGTGKT.

It belongs to the AAA ATPase family. Katanin p60 subunit A1 subfamily. A-like 1 sub-subfamily. In terms of assembly, interacts with KATNB1 and KATNBL1. Widely expressed, including in testis, brain, heart, lung, kidney, liver, spleen, seminal vesicles and ovary. In testis, restricted to Sertoli cells within the seminiferous epithelium (at protein level).

The protein localises to the cytoplasm. It is found in the cytoskeleton. The protein resides in the spindle pole. Its subcellular location is the spindle. It carries out the reaction n ATP + n H2O + a microtubule = n ADP + n phosphate + (n+1) alpha/beta tubulin heterodimers.. In terms of biological role, regulates microtubule dynamics in Sertoli cells, a process that is essential for spermiogenesis and male fertility. Severs microtubules in an ATP-dependent manner, promoting rapid reorganization of cellular microtubule arrays. Has microtubule-severing activity in vitro. The chain is Katanin p60 ATPase-containing subunit A-like 1 (Katnal1) from Mus musculus (Mouse).